The primary structure comprises 481 residues: Flavonol 3-O-glucosyltransferase UGT71C1 (481 aa).

H19 acts as the Proton acceptor in catalysis. Position 19 (H19) interacts with an anthocyanidin. Catalysis depends on D131, which acts as the Charge relay. UDP-alpha-D-glucose-binding residues include T153, A352, Q354, H369, W372, N373, S374, and E377. Residue A392 participates in an anthocyanidin binding. 2 residues coordinate UDP-alpha-D-glucose: E393 and Q394.

Belongs to the UDP-glycosyltransferase family.

It catalyses the reaction a flavonol + UDP-alpha-D-glucose = a flavonol 3-O-beta-D-glucoside + UDP + H(+). The enzyme catalyses a 7-O-hydroxy-flavonol + UDP-alpha-D-glucose = a flavonol 7-O-beta-D-glucoside + UDP + H(+). In terms of biological role, possesses quercetin 7-O-glucosyltransferase and 3'-O-glucosyltransferase activities in vitro. Also active in vitro on benzoates and benzoate derivatives. Glucosylates other secondary metabolites in vitro like trans-resveratrol, curcumin, vanillin and etoposide. The polypeptide is Flavonol 3-O-glucosyltransferase UGT71C1 (Arabidopsis thaliana (Mouse-ear cress)).